A 235-amino-acid polypeptide reads, in one-letter code: 2-C-methyl-D-erythritol 4-phosphate cytidylyltransferase (235 aa).

This sequence belongs to the IspD/TarI cytidylyltransferase family. IspD subfamily.

The enzyme catalyses 2-C-methyl-D-erythritol 4-phosphate + CTP + H(+) = 4-CDP-2-C-methyl-D-erythritol + diphosphate. It participates in isoprenoid biosynthesis; isopentenyl diphosphate biosynthesis via DXP pathway; isopentenyl diphosphate from 1-deoxy-D-xylulose 5-phosphate: step 2/6. Functionally, catalyzes the formation of 4-diphosphocytidyl-2-C-methyl-D-erythritol from CTP and 2-C-methyl-D-erythritol 4-phosphate (MEP). The protein is 2-C-methyl-D-erythritol 4-phosphate cytidylyltransferase of Pseudomonas putida (strain GB-1).